Consider the following 251-residue polypeptide: Triosephosphate isomerase (251 aa).

9–11 (NWK) is a binding site for substrate. Residue His95 is the Electrophile of the active site. Catalysis depends on Glu167, which acts as the Proton acceptor. Substrate is bound by residues Gly173, Ser213, and 234 to 235 (GG).

The protein belongs to the triosephosphate isomerase family. As to quaternary structure, homodimer.

The protein localises to the cytoplasm. The catalysed reaction is D-glyceraldehyde 3-phosphate = dihydroxyacetone phosphate. It functions in the pathway carbohydrate biosynthesis; gluconeogenesis. The protein operates within carbohydrate degradation; glycolysis; D-glyceraldehyde 3-phosphate from glycerone phosphate: step 1/1. In terms of biological role, involved in the gluconeogenesis. Catalyzes stereospecifically the conversion of dihydroxyacetone phosphate (DHAP) to D-glyceraldehyde-3-phosphate (G3P). The protein is Triosephosphate isomerase of Pelobacter propionicus (strain DSM 2379 / NBRC 103807 / OttBd1).